Consider the following 914-residue polypeptide: Translation initiation factor IF-2 (914 aa).

Disordered regions lie at residues 246–271 (EDGE…KKKG) and 293–313 (SGMD…QRRM). The span at 249 to 266 (EAAKKKAAKPDGGEDVGV) shows a compositional bias: basic and acidic residues. The tr-type G domain maps to 411–581 (TRPPVVTIMG…LAEAEIRELK (171 aa)). Residues 420–427 (GHVDHGKT) are G1. 420–427 (GHVDHGKT) is a GTP binding site. The interval 445–449 (GITQH) is G2. The tract at residues 467-470 (DTPG) is G3. Residues 467 to 471 (DTPGH) and 521 to 524 (NKID) each bind GTP. Residues 521-524 (NKID) form a G4 region. Residues 557 to 559 (SAK) form a G5 region.

This sequence belongs to the TRAFAC class translation factor GTPase superfamily. Classic translation factor GTPase family. IF-2 subfamily.

The protein localises to the cytoplasm. One of the essential components for the initiation of protein synthesis. Protects formylmethionyl-tRNA from spontaneous hydrolysis and promotes its binding to the 30S ribosomal subunits. Also involved in the hydrolysis of GTP during the formation of the 70S ribosomal complex. In Chlorobaculum tepidum (strain ATCC 49652 / DSM 12025 / NBRC 103806 / TLS) (Chlorobium tepidum), this protein is Translation initiation factor IF-2.